The primary structure comprises 275 residues: MPRKAKEYPEEGEFVIATVKSIHPYGAFLKLDEYPGKEGFMHISEVASTWVKNIRDYVKEGQKVVAKVIRVDPNKGHIDLSLKRVNQQQRKAKLQEYKRAQKAENLLKMAAEKLGKDFEMAWQEVWVPLEEEYGEVYAAFEDAAQNGIEVLKGIIPEEWLEPLNEIVQNYVEVPTVTIDAEFEITVPKPNGIEIIKEALIRARDRVNEDKDIEVKFTYQGAPRYRIDITAPDYYKAEEVLEDIAEEILRVIKQAGGEATLLRKEKRIKKIKRRGA.

One can recognise an S1 motif domain in the interval 12–83 (GEFVIATVKS…NKGHIDLSLK (72 aa)).

It belongs to the eIF-2-alpha family. In terms of assembly, heterotrimer composed of an alpha, a beta and a gamma chain.

Functionally, eIF-2 functions in the early steps of protein synthesis by forming a ternary complex with GTP and initiator tRNA. In Thermococcus onnurineus (strain NA1), this protein is Translation initiation factor 2 subunit alpha.